Reading from the N-terminus, the 555-residue chain is Protein FAM234A (555 aa).

Residues 1 to 22 (MMDNKDLEAEIHPLKNEDKKSQ) are compositionally biased toward basic and acidic residues. The interval 1–40 (MMDNKDLEAEIHPLKNEDKKSQENPGNLPRNEDNLKSKPV) is disordered. The Cytoplasmic segment spans residues 1–49 (MMDNKDLEAEIHPLKNEDKKSQENPGNLPRNEDNLKSKPVPSRLSRCRT). Residue S21 is modified to Phosphoserine. The chain crosses the membrane as a helical; Signal-anchor for type II membrane protein span at residues 50–70 (VAFFLSLFTCLFVVFVLSFII). Over 71–555 (PCPDRPSSQG…FSRLRYRSEM (485 aa)) the chain is Extracellular. 5 N-linked (GlcNAc...) asparagine glycosylation sites follow: N116, N120, N317, N392, and N476.

The protein belongs to the FAM234 family.

The protein localises to the membrane. This is Protein FAM234A from Mus musculus (Mouse).